The following is a 443-amino-acid chain: ATP-dependent protease ATPase subunit HslU (443 aa).

Residues Ile-18, 60 to 65 (GVGKTE), Asp-256, Glu-321, and Arg-393 each bind ATP.

This sequence belongs to the ClpX chaperone family. HslU subfamily. In terms of assembly, a double ring-shaped homohexamer of HslV is capped on each side by a ring-shaped HslU homohexamer. The assembly of the HslU/HslV complex is dependent on binding of ATP.

The protein localises to the cytoplasm. Its function is as follows. ATPase subunit of a proteasome-like degradation complex; this subunit has chaperone activity. The binding of ATP and its subsequent hydrolysis by HslU are essential for unfolding of protein substrates subsequently hydrolyzed by HslV. HslU recognizes the N-terminal part of its protein substrates and unfolds these before they are guided to HslV for hydrolysis. The sequence is that of ATP-dependent protease ATPase subunit HslU from Escherichia coli O17:K52:H18 (strain UMN026 / ExPEC).